The primary structure comprises 349 residues: Probable dual-specificity RNA methyltransferase RlmN (349 aa).

The Proton acceptor role is filled by glutamate 93. The Radical SAM core domain maps to 99-329 (YKHGNTICVS…TTIRREMGSD (231 aa)). A disulfide bridge connects residues cysteine 106 and cysteine 334. [4Fe-4S] cluster-binding residues include cysteine 113, cysteine 117, and cysteine 120. S-adenosyl-L-methionine is bound by residues 160 to 161 (GE), serine 192, 215 to 217 (SLH), and asparagine 291. Cysteine 334 acts as the S-methylcysteine intermediate in catalysis.

Belongs to the radical SAM superfamily. RlmN family. [4Fe-4S] cluster is required as a cofactor.

The protein localises to the cytoplasm. It carries out the reaction adenosine(2503) in 23S rRNA + 2 reduced [2Fe-2S]-[ferredoxin] + 2 S-adenosyl-L-methionine = 2-methyladenosine(2503) in 23S rRNA + 5'-deoxyadenosine + L-methionine + 2 oxidized [2Fe-2S]-[ferredoxin] + S-adenosyl-L-homocysteine. The enzyme catalyses adenosine(37) in tRNA + 2 reduced [2Fe-2S]-[ferredoxin] + 2 S-adenosyl-L-methionine = 2-methyladenosine(37) in tRNA + 5'-deoxyadenosine + L-methionine + 2 oxidized [2Fe-2S]-[ferredoxin] + S-adenosyl-L-homocysteine. In terms of biological role, specifically methylates position 2 of adenine 2503 in 23S rRNA and position 2 of adenine 37 in tRNAs. In Clostridium tetani (strain Massachusetts / E88), this protein is Probable dual-specificity RNA methyltransferase RlmN.